The sequence spans 183 residues: Dual-action ribosomal maturation protein DarP (183 aa).

The protein belongs to the DarP family.

Its subcellular location is the cytoplasm. Functionally, member of a network of 50S ribosomal subunit biogenesis factors which assembles along the 30S-50S interface, preventing incorrect 23S rRNA structures from forming. Promotes peptidyl transferase center (PTC) maturation. The protein is Dual-action ribosomal maturation protein DarP of Klebsiella pneumoniae (strain 342).